Reading from the N-terminus, the 236-residue chain is Large ribosomal subunit protein eL6 (236 aa).

It belongs to the eukaryotic ribosomal protein eL6 family.

The chain is Large ribosomal subunit protein eL6 (rpl6) from Dictyostelium discoideum (Social amoeba).